The following is a 263-amino-acid chain: Small ribosomal subunit protein eS4 (263 aa).

The S4 RNA-binding domain maps to 42 to 105; the sequence is LPLIIFLRNR…GENFRLIYDV (64 aa).

The protein belongs to the eukaryotic ribosomal protein eS4 family. As to quaternary structure, component of the small ribosomal subunit. Part of the small subunit (SSU) processome, composed of more than 70 proteins and the RNA chaperone small nucleolar RNA (snoRNA) U3.

It is found in the cytoplasm. Its subcellular location is the nucleus. It localises to the nucleolus. Its function is as follows. Component of the small ribosomal subunit. The ribosome is a large ribonucleoprotein complex responsible for the synthesis of proteins in the cell. Part of the small subunit (SSU) processome, first precursor of the small eukaryotic ribosomal subunit. During the assembly of the SSU processome in the nucleolus, many ribosome biogenesis factors, an RNA chaperone and ribosomal proteins associate with the nascent pre-rRNA and work in concert to generate RNA folding, modifications, rearrangements and cleavage as well as targeted degradation of pre-ribosomal RNA by the RNA exosome. This is Small ribosomal subunit protein eS4 (rps4x) from Danio rerio (Zebrafish).